An 86-amino-acid polypeptide reads, in one-letter code: MDAFDVIKTPIVSEKTMKLIEEENRLVFYVERKATKEDIKEAIKQLFNAEVAEVNTNITPKGQKKAYIKLKDEYNAGEVAASLGIY.

Belongs to the universal ribosomal protein uL23 family. Part of the 50S ribosomal subunit. Contacts protein L29.

In terms of biological role, binds to 23S rRNA. One of the proteins that surrounds the polypeptide exit tunnel on the outside of the ribosome. In Methanococcus vannielii (strain ATCC 35089 / DSM 1224 / JCM 13029 / OCM 148 / SB), this protein is Large ribosomal subunit protein uL23.